The following is a 171-amino-acid chain: Shikimate kinase (171 aa).

11-16 provides a ligand contact to ATP; the sequence is ATGKTT. Thr15 provides a ligand contact to Mg(2+). Positions 33, 57, and 79 each coordinate substrate. ATP is bound at residue Arg117. Residue Arg136 coordinates substrate.

Belongs to the shikimate kinase family. As to quaternary structure, monomer. It depends on Mg(2+) as a cofactor.

The protein resides in the cytoplasm. The catalysed reaction is shikimate + ATP = 3-phosphoshikimate + ADP + H(+). Its pathway is metabolic intermediate biosynthesis; chorismate biosynthesis; chorismate from D-erythrose 4-phosphate and phosphoenolpyruvate: step 5/7. Catalyzes the specific phosphorylation of the 3-hydroxyl group of shikimic acid using ATP as a cosubstrate. In Thermoanaerobacter pseudethanolicus (strain ATCC 33223 / 39E) (Clostridium thermohydrosulfuricum), this protein is Shikimate kinase.